A 90-amino-acid chain; its full sequence is Putative ATPase inhibitor, mitochondrial (90 aa).

The stretch at E42–N89 forms a coiled coil.

The protein belongs to the ATPase inhibitor family.

Its subcellular location is the mitochondrion. Forms a one-to-one complex with ATPase to inhibit the enzyme activity completely. In Schizosaccharomyces pombe (strain 972 / ATCC 24843) (Fission yeast), this protein is Putative ATPase inhibitor, mitochondrial (inh1).